The following is a 1131-amino-acid chain: PolyA-specific ribonuclease subunit panl-2 (1131 aa).

Positions 489–864 (VTMQSTHGMN…LPALLAYKKK (376 aa)) constitute a USP domain. The Exonuclease domain occupies 909-1074 (VGLDAEFIKI…VDARYALKLY (166 aa)). Residues 1104-1115 (QTSSPLVVSTTR) show a composition bias toward polar residues. The interval 1104-1131 (QTSSPLVVSTTRKTPEDTNPADAAPKSV) is disordered.

The sequence is that of PolyA-specific ribonuclease subunit panl-2 from Caenorhabditis elegans.